Here is a 470-residue protein sequence, read N- to C-terminus: Flavin-containing monooxygenase FMO GS-OX-like 6 (470 aa).

Gly17–Gly22 is a binding site for FAD. An NADP(+)-binding site is contributed by Gly214 to Gly219.

This sequence belongs to the FMO family. It depends on FAD as a cofactor.

Functionally, catalyzes the conversion of methylthioalkyl glucosinolates of any chain length into methylsulfinylalkyl glucosinolates. The polypeptide is Flavin-containing monooxygenase FMO GS-OX-like 6 (Arabidopsis thaliana (Mouse-ear cress)).